A 386-amino-acid polypeptide reads, in one-letter code: GTPase Obg (386 aa).

Residues 4-162 enclose the Obg domain; it reads SNFVDYVKIY…MTVILELKLL (159 aa). Residues 18-45 form a disordered region; the sequence is KGGRGSTHMRREKYTPNGGPDGGDGGRG. Positions 36–45 are enriched in gly residues; sequence GPDGGDGGRG. One can recognise an OBG-type G domain in the interval 163–329; the sequence is ADVGLVGFPN…LKDILWTELN (167 aa). GTP contacts are provided by residues 169-176, 194-198, 216-219, 283-286, and 310-312; these read GFPNAGKS, FTTLE, DIPG, TKSD, and SSV. Residues serine 176 and threonine 196 each coordinate Mg(2+). A disordered region spans residues 351-386; the sequence is ELKDMGEDEELDYEYEDDGDEDDLDYEYEEEDWEDK. Over residues 356–386 the composition is skewed to acidic residues; it reads GEDEELDYEYEDDGDEDDLDYEYEEEDWEDK.

The protein belongs to the TRAFAC class OBG-HflX-like GTPase superfamily. OBG GTPase family. In terms of assembly, monomer. Requires Mg(2+) as cofactor.

It localises to the cytoplasm. Functionally, an essential GTPase which binds GTP, GDP and possibly (p)ppGpp with moderate affinity, with high nucleotide exchange rates and a fairly low GTP hydrolysis rate. Plays a role in control of the cell cycle, stress response, ribosome biogenesis and in those bacteria that undergo differentiation, in morphogenesis control. This Bacteroides fragilis (strain YCH46) protein is GTPase Obg.